We begin with the raw amino-acid sequence, 277 residues long: Large ribosomal subunit protein uL2 (277 aa).

The segment at Val223–Thr264 is disordered.

It belongs to the universal ribosomal protein uL2 family. In terms of assembly, part of the 50S ribosomal subunit. Forms a bridge to the 30S subunit in the 70S ribosome.

One of the primary rRNA binding proteins. Required for association of the 30S and 50S subunits to form the 70S ribosome, for tRNA binding and peptide bond formation. It has been suggested to have peptidyltransferase activity; this is somewhat controversial. Makes several contacts with the 16S rRNA in the 70S ribosome. This is Large ribosomal subunit protein uL2 from Nitrosomonas eutropha (strain DSM 101675 / C91 / Nm57).